The primary structure comprises 317 residues: MAVQGSQRRLLGSLNSTPTAIPQLGLAANQTGARCLEVSIPDGLFLSLGLVSLVENMLVVATIAKNRNLHSPMYCFICCLALSDLLVSGSNVLETAVILLLEAGALVARAAVLQQVDNVIDVITCSSMLSSLCFLGAIAVDRYISIFYALRYHSIVTLPRARRAIAAIWVASVLFSTLFIAYCDHTAVLLCLVVFFLAVLVLMAVLYVHMLARACQHAQGIARLHKRQRPVHQGFGLKGAVTLTILLGIFFLCWGPFFLHLTLIVLCPEHPTCGCIFKNFNLFLALIICNAIIDPLIYAFHSQELRRTLKEVLTCSW.

Residues 1–37 (MAVQGSQRRLLGSLNSTPTAIPQLGLAANQTGARCLE) are Extracellular-facing. The N-linked (GlcNAc...) asparagine glycan is linked to N29. The chain crosses the membrane as a helical span at residues 38–63 (VSIPDGLFLSLGLVSLVENMLVVATI). Residues 64 to 72 (AKNRNLHSP) lie on the Cytoplasmic side of the membrane. Residues 73–93 (MYCFICCLALSDLLVSGSNVL) traverse the membrane as a helical segment. At 94-118 (ETAVILLLEAGALVARAAVLQQVDN) the chain is on the extracellular side. Residues 119-140 (VIDVITCSSMLSSLCFLGAIAV) traverse the membrane as a helical segment. Residues 141–163 (DRYISIFYALRYHSIVTLPRARR) are Cytoplasmic-facing. A helical transmembrane segment spans residues 164–183 (AIAAIWVASVLFSTLFIAYC). Residues 184 to 191 (DHTAVLLC) lie on the Extracellular side of the membrane. The chain crosses the membrane as a helical span at residues 192 to 211 (LVVFFLAVLVLMAVLYVHML). Residues 212-240 (ARACQHAQGIARLHKRQRPVHQGFGLKGA) lie on the Cytoplasmic side of the membrane. The chain crosses the membrane as a helical span at residues 241 to 266 (VTLTILLGIFFLCWGPFFLHLTLIVL). The Extracellular portion of the chain corresponds to 267 to 279 (CPEHPTCGCIFKN). The chain crosses the membrane as a helical span at residues 280–300 (FNLFLALIICNAIIDPLIYAF). The Cytoplasmic segment spans residues 301-317 (HSQELRRTLKEVLTCSW). Residue C315 is the site of S-palmitoyl cysteine attachment.

This sequence belongs to the G-protein coupled receptor 1 family. Interacts with MGRN1, but does not undergo MGRN1-mediated ubiquitination; this interaction competes with GNAS-binding and thus inhibits agonist-induced cAMP production. Interacts with OPN3; the interaction results in a decrease in MC1R-mediated cAMP signaling and ultimately a decrease in melanin production in melanocytes.

Its subcellular location is the cell membrane. Functionally, receptor for MSH (alpha, beta and gamma) and ACTH. The activity of this receptor is mediated by G proteins which activate adenylate cyclase. Mediates melanogenesis, the production of eumelanin (black/brown) and phaeomelanin (red/yellow), via regulation of cAMP signaling in melanocytes. The polypeptide is Melanocyte-stimulating hormone receptor (MC1R) (Pan troglodytes (Chimpanzee)).